Reading from the N-terminus, the 270-residue chain is F420 non-reducing hydrogenase II cytochrome subunit (270 aa).

Helical transmembrane passes span 27–47, 57–77, 139–159, 173–193, and 195–215; these read AIAMIVLIITGLKIYAGWEFM, MIAVPFLLAVNWILIPYNIFS, ILIPLEGLALFLITVSGIVLY, WIISISGMIAPTFGMTPVGFL, and VLHLLMTYWFIFELVVHVGIL.

The protein belongs to the HupC/HyaC/HydC family. In terms of assembly, composed of a large subunit (VhtA), a small subunit (VhtG) and a cytochrome subunit (VhtC). It depends on heme b as a cofactor.

It localises to the cell membrane. The catalysed reaction is methanophenazine + H2 = dihydromethanophenazine. In terms of biological role, part of the F420 non-reducing hydrogenase II complex that catalyzes the reduction of methanophenazine to dihydromethanophenazine. The chain is F420 non-reducing hydrogenase II cytochrome subunit from Methanosarcina mazei (strain ATCC BAA-159 / DSM 3647 / Goe1 / Go1 / JCM 11833 / OCM 88) (Methanosarcina frisia).